Reading from the N-terminus, the 428-residue chain is GTPase Obg (428 aa).

Residues 1-158 (MFIDTAKIFV…RWVALELKLL (158 aa)) enclose the Obg domain. The region spanning 159 to 331 (ADVGLLGFPN…VIKEAARMLK (173 aa)) is the OBG-type G domain. GTP-binding positions include 165 to 172 (GFPNVGKS), 190 to 194 (FTTLK), 212 to 215 (DVPG), 282 to 285 (NKCD), and 312 to 314 (SAA). 2 residues coordinate Mg(2+): serine 172 and threonine 192. The region spanning 345–428 (RFIPEDKKFT…LNDFEFEYLL (84 aa)) is the OCT domain.

Belongs to the TRAFAC class OBG-HflX-like GTPase superfamily. OBG GTPase family. In terms of assembly, monomer. Requires Mg(2+) as cofactor.

The protein resides in the cytoplasm. In terms of biological role, an essential GTPase which binds GTP, GDP and possibly (p)ppGpp with moderate affinity, with high nucleotide exchange rates and a fairly low GTP hydrolysis rate. Plays a role in control of the cell cycle, stress response, ribosome biogenesis and in those bacteria that undergo differentiation, in morphogenesis control. The polypeptide is GTPase Obg (Clostridium perfringens (strain ATCC 13124 / DSM 756 / JCM 1290 / NCIMB 6125 / NCTC 8237 / Type A)).